The sequence spans 135 residues: Large ribosomal subunit protein uL16c (135 aa).

It belongs to the universal ribosomal protein uL16 family. As to quaternary structure, part of the 50S ribosomal subunit.

The protein resides in the plastid. It localises to the chloroplast. This Lotus japonicus (Lotus corniculatus var. japonicus) protein is Large ribosomal subunit protein uL16c.